A 99-amino-acid chain; its full sequence is Fetal and adult testis-expressed transcript protein homolog (99 aa).

Residues 79–98 traverse the membrane as a helical segment; sequence AALFTLLVSVCIANLWLWVH.

Interacts with BIK and RNF183. Interacts with IMMT/MIC60and EMD.

The protein resides in the mitochondrion. The protein localises to the mitochondrion outer membrane. Its subcellular location is the endoplasmic reticulum membrane. In terms of biological role, involved in the regulation of endoplasmic reticulum (ER)-mitochondria coupling. Negatively regulates the ER-mitochondria distance and Ca(2+) transfer from ER to mitochondria possibly implicating it in the regulation of apoptosis. May collaborate with RNF183 to restrain BIK protein levels thus regulating apoptotic signaling. The polypeptide is Fetal and adult testis-expressed transcript protein homolog (Fate1) (Mus musculus (Mouse)).